The primary structure comprises 172 residues: uncharacterized protein (172 aa).

Disordered regions lie at residues 1-39 (MAKVSNYNNNNNNNNNNNNNNNNNNNYNQNSNNNINSNN) and 90-112 (DLNGDDTFNDSNNDNSPSRGSIN). The span at 98–110 (NDSNNDNSPSRGS) shows a compositional bias: low complexity.

This is an uncharacterized protein from Dictyostelium discoideum (Social amoeba).